We begin with the raw amino-acid sequence, 279 residues long: Acetylglutamate kinase (279 aa).

Residues 62–63, Arg-84, and Asn-177 contribute to the substrate site; that span reads GG.

It belongs to the acetylglutamate kinase family. ArgB subfamily.

It localises to the cytoplasm. It carries out the reaction N-acetyl-L-glutamate + ATP = N-acetyl-L-glutamyl 5-phosphate + ADP. Its pathway is amino-acid biosynthesis; L-arginine biosynthesis; N(2)-acetyl-L-ornithine from L-glutamate: step 2/4. Its function is as follows. Catalyzes the ATP-dependent phosphorylation of N-acetyl-L-glutamate. The sequence is that of Acetylglutamate kinase from Pseudothermotoga lettingae (strain ATCC BAA-301 / DSM 14385 / NBRC 107922 / TMO) (Thermotoga lettingae).